A 97-amino-acid chain; its full sequence is Aspartyl/glutamyl-tRNA(Asn/Gln) amidotransferase subunit C (97 aa).

Belongs to the GatC family. As to quaternary structure, heterotrimer of A, B and C subunits.

It carries out the reaction L-glutamyl-tRNA(Gln) + L-glutamine + ATP + H2O = L-glutaminyl-tRNA(Gln) + L-glutamate + ADP + phosphate + H(+). The enzyme catalyses L-aspartyl-tRNA(Asn) + L-glutamine + ATP + H2O = L-asparaginyl-tRNA(Asn) + L-glutamate + ADP + phosphate + 2 H(+). Allows the formation of correctly charged Asn-tRNA(Asn) or Gln-tRNA(Gln) through the transamidation of misacylated Asp-tRNA(Asn) or Glu-tRNA(Gln) in organisms which lack either or both of asparaginyl-tRNA or glutaminyl-tRNA synthetases. The reaction takes place in the presence of glutamine and ATP through an activated phospho-Asp-tRNA(Asn) or phospho-Glu-tRNA(Gln). In Listeria monocytogenes serotype 4b (strain CLIP80459), this protein is Aspartyl/glutamyl-tRNA(Asn/Gln) amidotransferase subunit C.